A 62-amino-acid chain; its full sequence is Short neurotoxin 3 (62 aa).

Disulfide bonds link cysteine 3/cysteine 24, cysteine 17/cysteine 41, cysteine 43/cysteine 54, and cysteine 55/cysteine 60.

Belongs to the three-finger toxin family. Short-chain subfamily. Type I alpha-neurotoxin sub-subfamily. As to expression, expressed by the venom gland.

The protein localises to the secreted. Binds to muscle nicotinic acetylcholine receptor (nAChR) and inhibit acetylcholine from binding to the receptor, thereby impairing neuromuscular transmission. The sequence is that of Short neurotoxin 3 from Naja mossambica (Mozambique spitting cobra).